The following is a 579-amino-acid chain: MSAANPETPNSTISREASTQSSSAAASQGWVLPEGKIVPNTVFVGGIDARMDETEIGSCFGRYGSVKEVKIITNRTGVSKGYGFVSFVNDVDVQKIVGSQIHFHGKKLKLGPAIRKQKLCARHVQPRPLVVNPPPPPQFQNVWRNPNTETYLQPQITPNPVTQHVQSAANPETPNSTISREASTQSSSAAASQGWVLPEGKIVPNTVFVGGIDARMDETEIGSCFGRYGSVKEVKIITNRTGVSKGYGFVSFVNDVDVQKIVGSQIHFHGKKLKLGPAIRKQKLCARHVQPRPLVVNPPPPPQFQNVWRNPNTETYLQPQITPNPVTQHVQAYSAYPHSPGQVITGCQLLVYNYQEYPTYPDSAFQVTTGYQLPVYNYQPFPAYPRSPFQVTAGYQLPVYNYQAFPAYPNSPFQVATGYQFPVYNYQPFPAYPSSPFQVTAGYQLPVYNYQAFPAYPNSPFQVATGYQFPVYNYQAFPAYPNSPVQVTTGYQLPVYNYQAFPAYPSSPFQVTTGYQLPVYNYQAFPAYPNSAVQVTTGYQFHVYNYQMPPQCPVGEQRRNLWTEAYKWWYLVCLIQRRD.

Residues 1 to 10 (MSAANPETPN) show a composition bias toward polar residues. The interval 1-27 (MSAANPETPNSTISREASTQSSSAAAS) is disordered. A compositionally biased stretch (low complexity) spans 11–27 (STISREASTQSSSAAAS). Residues 40-115 (NTVFVGGIDA…KKLKLGPAIR (76 aa)) form the RRM 1 domain. Positions 163–175 (QHVQSAANPETPN) are enriched in polar residues. A disordered region spans residues 163–192 (QHVQSAANPETPNSTISREASTQSSSAAAS). Positions 176–192 (STISREASTQSSSAAAS) are enriched in low complexity. The RRM 2 domain occupies 205-280 (NTVFVGGIDA…KKLKLGPAIR (76 aa)). 9 DAZ domains span residues 332–355 (AYSAYPHSPGQVITGCQLLVYNYQ), 356–379 (EYPTYPDSAFQVTTGYQLPVYNYQ), 380–403 (PFPAYPRSPFQVTAGYQLPVYNYQ), 404–427 (AFPAYPNSPFQVATGYQFPVYNYQ), 428–451 (PFPAYPSSPFQVTAGYQLPVYNYQ), 452–475 (AFPAYPNSPFQVATGYQFPVYNYQ), 476–499 (AFPAYPNSPVQVTTGYQLPVYNYQ), 500–523 (AFPAYPSSPFQVTTGYQLPVYNYQ), and 524–547 (AFPAYPNSAVQVTTGYQFHVYNYQ).

The protein belongs to the RRM DAZ family. Forms a heterodimer with BOLL and DAZL. Interacts with PUM2, DAZAP1, DAZAP2, DZIP1 and DZIP3. Testis-specific. Expression restricted to premeiotic germ cells, particularly in spermatogonia (at protein level).

It localises to the cytoplasm. Its subcellular location is the nucleus. Functionally, RNA-binding protein that plays an essential role in spermatogenesis. May act by binding to the 3'-UTR of mRNAs and regulating their translation. In Homo sapiens (Human), this protein is Deleted in azoospermia protein 4 (DAZ4).